The chain runs to 1548 residues: Dicer-like protein 1 (1548 aa).

The span at 1 to 41 (MGDPAAHEMADLERGFSSEDDAEYRSGDDEASKFVENEPSK) shows a compositional bias: basic and acidic residues. The interval 1-48 (MGDPAAHEMADLERGFSSEDDAEYRSGDDEASKFVENEPSKRGKISQK) is disordered. A Helicase ATP-binding domain is found at 106–289 (LFERAKQQNT…QAAIELEGLL (184 aa)). An ATP-binding site is contributed by 119–126 (LDTGSGKT). Positions 232–235 (DEAH) match the DEAH box motif. A Helicase C-terminal domain is found at 428-589 (TLSKLLEEYF…FCNTQPEDRL (162 aa)). Residues 624-718 (SLPILQAFLN…RSKFVEKRHV (95 aa)) enclose the Dicer dsRNA-binding fold domain. One can recognise a PAZ domain in the interval 871 to 1006 (PLLRHVADRD…FVLEPMRISP (136 aa)). 2 consecutive RNase III domains span residues 1051-1197 (LTKD…MTTR) and 1248-1411 (AQKI…VDSK). The Mg(2+) site is built by Glu-1288, Asp-1397, and Glu-1400. In terms of domain architecture, DRBM spans 1445 to 1518 (TFFTQYVFET…ARKALDKLRS (74 aa)). Cys-1457, His-1489, Cys-1530, and Cys-1532 together coordinate Zn(2+).

It belongs to the helicase family. Dicer subfamily. It depends on Mg(2+) as a cofactor. The cofactor is Mn(2+).

In terms of biological role, dicer-like endonuclease involved in cleaving double-stranded RNA in the RNA interference (RNAi) pathway. Produces 21 to 25 bp dsRNAs (siRNAs) which target the selective destruction of homologous RNAs leading to sequence-specific suppression of gene expression, called post-transcriptional gene silencing (PTGS). Part of a broad host defense response against viral infection and transposons. The chain is Dicer-like protein 1 (DCL-1) from Cryphonectria parasitica (Chestnut blight fungus).